The primary structure comprises 284 residues: tRNA (guanine-N(7)-)-methyltransferase (284 aa).

S-adenosyl-L-methionine is bound by residues glycine 102, 125 to 126, 160 to 161, and cysteine 180; these read EI and NT. The active site involves aspartate 183. 258 to 260 is an S-adenosyl-L-methionine binding site; the sequence is TEE.

It belongs to the class I-like SAM-binding methyltransferase superfamily. TrmB family. In terms of assembly, forms a complex with TRM82.

It localises to the nucleus. It carries out the reaction guanosine(46) in tRNA + S-adenosyl-L-methionine = N(7)-methylguanosine(46) in tRNA + S-adenosyl-L-homocysteine. It participates in tRNA modification; N(7)-methylguanine-tRNA biosynthesis. In terms of biological role, catalyzes the formation of N(7)-methylguanine at position 46 (m7G46) in tRNA. The protein is tRNA (guanine-N(7)-)-methyltransferase of Podospora anserina (strain S / ATCC MYA-4624 / DSM 980 / FGSC 10383) (Pleurage anserina).